A 258-amino-acid chain; its full sequence is Snake venom serine protease 5 (258 aa).

The first 18 residues, 1-18 (MVLIRVLANLLILQLSYA), serve as a signal peptide directing secretion. Residues 19 to 24 (QKSSEL) constitute a propeptide that is removed on maturation. The Peptidase S1 domain occupies 25 to 249 (VVGGRPCNIN…HLDWIQNIIA (225 aa)). Disulfide bonds link cysteine 31/cysteine 163, cysteine 50/cysteine 66, cysteine 98/cysteine 256, cysteine 142/cysteine 210, cysteine 174/cysteine 189, and cysteine 200/cysteine 225. Asparagine 44 carries an N-linked (GlcNAc...) asparagine glycan. The active-site Charge relay system is histidine 65. A glycan (N-linked (GlcNAc...) asparagine) is linked at asparagine 103. Catalysis depends on aspartate 110, which acts as the Charge relay system. Asparagine 121, asparagine 122, asparagine 154, and asparagine 170 each carry an N-linked (GlcNAc...) asparagine glycan. The active-site Charge relay system is serine 204. A glycan (N-linked (GlcNAc...) asparagine) is linked at asparagine 251.

This sequence belongs to the peptidase S1 family. Snake venom subfamily. Monomer. As to expression, expressed by the venom gland.

Its subcellular location is the secreted. Its function is as follows. Snake venom serine protease that may act in the hemostasis system of the prey. The polypeptide is Snake venom serine protease 5 (Trimeresurus stejnegeri (Chinese green tree viper)).